The chain runs to 100 residues: NADH-quinone oxidoreductase subunit K (100 aa).

The next 3 helical transmembrane spans lie at 4-24 (LSYSLSLAAILFMLGLTGIMI), 29-49 (LFLLLGLEIMINAAALAFVIV), and 60-80 (VMYILTVTIAATEASIGLALL).

This sequence belongs to the complex I subunit 4L family. In terms of assembly, NDH-1 is composed of 14 different subunits. Subunits NuoA, H, J, K, L, M, N constitute the membrane sector of the complex.

It is found in the cell membrane. It catalyses the reaction a quinone + NADH + 5 H(+)(in) = a quinol + NAD(+) + 4 H(+)(out). NDH-1 shuttles electrons from NADH, via FMN and iron-sulfur (Fe-S) centers, to quinones in the respiratory chain. The immediate electron acceptor for the enzyme in this species is believed to be ubiquinone. Couples the redox reaction to proton translocation (for every two electrons transferred, four hydrogen ions are translocated across the cytoplasmic membrane), and thus conserves the redox energy in a proton gradient. The protein is NADH-quinone oxidoreductase subunit K of Baumannia cicadellinicola subsp. Homalodisca coagulata.